Reading from the N-terminus, the 229-residue chain is Large ribosomal subunit protein uL1c (229 aa).

Belongs to the universal ribosomal protein uL1 family. In terms of assembly, part of the 50S ribosomal subunit.

It is found in the plastid. The protein localises to the chloroplast. Functionally, binds directly to 23S rRNA. Might be involved in E site tRNA release (Potential). The protein is Large ribosomal subunit protein uL1c (rpl1) of Pyropia yezoensis (Susabi-nori).